Here is a 184-residue protein sequence, read N- to C-terminus: UPF0316 protein BPUM_0594 (184 aa).

The next 3 helical transmembrane spans lie at 9 to 29, 41 to 61, and 67 to 87; these read AFTM…FSTM, AAAF…SIVL, and IQNV…GMKI.

This sequence belongs to the UPF0316 family.

It localises to the cell membrane. The sequence is that of UPF0316 protein BPUM_0594 from Bacillus pumilus (strain SAFR-032).